The chain runs to 151 residues: MRVSLDEIDRRIIKILQKDGKAPLREISKITGLAESTIHERIKKLRESGVIRKFTAIVNPEALGYSMLAFILIKVKAGKYAEVASNLVKYEEIMEVYETTGDYDMVVKIRTKNSEELNSFLDVIGSIPGVEGTHTMIVLKTHKETTELPIK.

The 62-residue stretch at L5–S66 folds into the HTH asnC-type domain. The H-T-H motif DNA-binding region spans L24 to K43. Residue E98–D104 coordinates L-arginine. Residues N118, D122, and T133 to T135 each bind L-lysine. Residues D122 and T133–T135 each bind L-arginine.

As to quaternary structure, homodimer. Binds DNA as a dimer and an octamer.

In the famine mode, FL11 forms dimers and acts as a repressor, leading to growth arrest. In the feast mode, in the presence of high concentrations of lysine or arginine, four dimers assemble into an octamer and cover the fl11 and lysine biosynthesis promoters. This leads to the inhibition of fl11 expression and lysine biosynthesis, decrease of the FL11 concentration in the cell, derepression of the target genes and activation of the metabolism. DNA-binding protein involved in the repression of transcription of a large number of genes, thereby arresting growth, in response to environmental changes. In Pyrococcus abyssi (strain GE5 / Orsay), this protein is HTH-type transcriptional regulator FL11.